A 533-amino-acid polypeptide reads, in one-letter code: Probable dolichyl pyrophosphate Man9GlcNAc2 alpha-1,3-glucosyltransferase (533 aa).

The segment at 1–20 is disordered; that stretch reads MPKKKPAKHSGEDDITIPVS. Helical transmembrane passes span 42 to 64, 149 to 169, 184 to 204, 214 to 234, 264 to 284, 360 to 380, 422 to 442, 463 to 483, and 491 to 511; these read FLCI…YSGA, WTVL…FVLV, WHIA…GHFQ, VGAI…LFSL, ILSV…FWWP, GFLY…FQVH, LLIP…SPGN, VFLL…YLTI, and FLFE…FAFY.

Belongs to the ALG6/ALG8 glucosyltransferase family.

Its subcellular location is the endoplasmic reticulum membrane. The catalysed reaction is an alpha-D-Man-(1-&gt;2)-alpha-D-Man-(1-&gt;2)-alpha-D-Man-(1-&gt;3)-[alpha-D-Man-(1-&gt;2)-alpha-D-Man-(1-&gt;3)-[alpha-D-Man-(1-&gt;2)-alpha-D-Man-(1-&gt;6)]-alpha-D-Man-(1-&gt;6)]-beta-D-Man-(1-&gt;4)-beta-D-GlcNAc-(1-&gt;4)-alpha-D-GlcNAc-diphospho-di-trans,poly-cis-dolichol + a di-trans,poly-cis-dolichyl beta-D-glucosyl phosphate = an alpha-D-Glc-(1-&gt;3)-alpha-D-Man-(1-&gt;2)-alpha-D-Man-(1-&gt;2)-alpha-D-Man-(1-&gt;3)-[alpha-D-Man-(1-&gt;2)-alpha-D-Man-(1-&gt;3)-[alpha-D-Man-(1-&gt;2)-alpha-D-Man-(1-&gt;6)]-alpha-D-Man-(1-&gt;6)]-beta-D-Man-(1-&gt;4)-beta-D-GlcNAc-(1-&gt;4)-alpha-D-GlcNAc-diphospho-di-trans,poly-cis-dolichol + a di-trans,poly-cis-dolichyl phosphate + H(+). It participates in protein modification; protein glycosylation. Its function is as follows. Adds the first glucose residue to the lipid-linked oligosaccharide precursor for N-linked glycosylation. Transfers glucose from dolichyl phosphate glucose (Dol-P-Glc) onto the lipid-linked oligosaccharide Man(9)GlcNAc(2)-PP-Dol. This Arabidopsis thaliana (Mouse-ear cress) protein is Probable dolichyl pyrophosphate Man9GlcNAc2 alpha-1,3-glucosyltransferase.